Reading from the N-terminus, the 144-residue chain is D-aminoacyl-tRNA deacylase (144 aa).

Residues 136–137 carry the Gly-cisPro motif, important for rejection of L-amino acids motif; sequence GP.

It belongs to the DTD family. As to quaternary structure, homodimer.

The protein resides in the cytoplasm. It catalyses the reaction glycyl-tRNA(Ala) + H2O = tRNA(Ala) + glycine + H(+). The catalysed reaction is a D-aminoacyl-tRNA + H2O = a tRNA + a D-alpha-amino acid + H(+). Functionally, an aminoacyl-tRNA editing enzyme that deacylates mischarged D-aminoacyl-tRNAs. Also deacylates mischarged glycyl-tRNA(Ala), protecting cells against glycine mischarging by AlaRS. Acts via tRNA-based rather than protein-based catalysis; rejects L-amino acids rather than detecting D-amino acids in the active site. By recycling D-aminoacyl-tRNA to D-amino acids and free tRNA molecules, this enzyme counteracts the toxicity associated with the formation of D-aminoacyl-tRNA entities in vivo and helps enforce protein L-homochirality. The protein is D-aminoacyl-tRNA deacylase of Corynebacterium glutamicum (strain R).